The chain runs to 87 residues: UPF0335 protein Avi_3695 (87 aa).

The protein belongs to the UPF0335 family.

The polypeptide is UPF0335 protein Avi_3695 (Allorhizobium ampelinum (strain ATCC BAA-846 / DSM 112012 / S4) (Agrobacterium vitis (strain S4))).